The following is a 335-amino-acid chain: ATP-dependent 6-phosphofructokinase (335 aa).

An ATP-binding site is contributed by glycine 11. 21-25 is an ADP binding site; the sequence is RAVVR. Residues 72 to 73 and 102 to 105 contribute to the ATP site; these read RY and GDGS. Mg(2+) is bound at residue aspartate 103. 125-127 is a binding site for substrate; it reads TID. Aspartate 127 (proton acceptor) is an active-site residue. Arginine 154 contributes to the ADP binding site. Substrate-binding positions include arginine 162 and 169-171; that span reads MGR. ADP-binding positions include 185 to 187 and 213 to 215; these read GAD and KKH. Residues glutamate 222, arginine 244, and 250–253 each bind substrate; that span reads HIQR.

Belongs to the phosphofructokinase type A (PFKA) family. ATP-dependent PFK group I subfamily. Prokaryotic clade 'B1' sub-subfamily. Homotetramer. It depends on Mg(2+) as a cofactor.

The protein localises to the cytoplasm. The enzyme catalyses beta-D-fructose 6-phosphate + ATP = beta-D-fructose 1,6-bisphosphate + ADP + H(+). It participates in carbohydrate degradation; glycolysis; D-glyceraldehyde 3-phosphate and glycerone phosphate from D-glucose: step 3/4. Allosterically activated by ADP and other diphosphonucleosides, and allosterically inhibited by phosphoenolpyruvate. Its function is as follows. Catalyzes the phosphorylation of D-fructose 6-phosphate to fructose 1,6-bisphosphate by ATP, the first committing step of glycolysis. In Streptococcus pneumoniae serotype 19F (strain G54), this protein is ATP-dependent 6-phosphofructokinase.